Consider the following 330-residue polypeptide: Flotillin-like protein FloA (330 aa).

2 consecutive transmembrane segments (helical) span residues 3–23 and 26–46; these read IISVIVIGGLVLVAIVATLYM and LRLWIAAQASGAGVSMLTLIA.

The protein belongs to the flotillin-like FloA family. As to quaternary structure, homooligomerizes.

It localises to the cell membrane. The protein localises to the membrane raft. Found in functional membrane microdomains (FMM) that may be equivalent to eukaryotic membrane rafts. FMMs are highly dynamic and increase in number as cells age. Flotillins are thought to be important factors in membrane fluidity. In Sorangium cellulosum (strain So ce56) (Polyangium cellulosum (strain So ce56)), this protein is Flotillin-like protein FloA.